Here is a 939-residue protein sequence, read N- to C-terminus: MKDYKTTLNLPKTNFSMKGNLSKKEPFILKKWNDNNIYSLIKKQNIGKKKFFLNDGPPYANGNIHIGHAINKILKDIVIKFKTLSGFDTYYTPSWDCHGLPIEHKVEKTIKKENILITKKEFRIKCRNYAQSQVNNQKLEFIRLGVFGDWENSYLTMNFKNEANIARTLMKMFKYGYVYQDFKPVHWCINCKSALAEAEVEYHNKLSNSIIIKFKLAHNINFWNQIFKNDHNQDIHLVVWTTTPWTLPASQAIALNPNFKYQLIQTNNNLFIISEKSVPDTMNKMGIQKWKKIHIFLGKNISNLKVIHPFLNTTIPVILADHVTQELGTGIVHTAPEFGQDDYYACKKNNINFTPTIDKKGHFLNNIHPKLNNINIFKSIKIVIKLLNNNNALLHSEKLVHSYPYCWRHKTPIISRATQQWFININHNNLRNRCIKYIQEVKWIPHWSKNRMIEMIINRPDWCISRQRTWGVPIPIFIHRKTGKLHPDTIKLSQKIIQNIETNGIQAWFDITEKSFLGELFKQYKKVTDVIDVWFESGSIQLSNIYNKIQHQHNNISDLYIEGLDQHRGWFMSSLIISAAISNQTPYKKVITHGFVVDKNKKKMSKSIGNTVHPSEVINTLGSDILRLWTASTNYSKEMSISQETLIHISDYYRRIRNTARFLLANLHEFNPENDLINAKNMIILDKWAIGKALHIQKKIIKSYKNYNFHDVIKYLMNFCSLDMGTFYLEIIKDRQYTTQKNSIARRSCQTAMYLILTAFVKWITPILPFTSDELWEYIPGTNKNKFVFLELWSNQLFDLNHKDTMNHEYWNQLLIIKTEVNKALEHARQNKIIRKSLEAHMTLYVNETIKCNLKLLNKELKFLFITSKVEIKNFYEAPKDAFQSETITNFKTIIKKMNGIKCPRCWHIITKIKNNKNHEICKRCILNTIGPGELRQFL.

Residues 58 to 68 carry the 'HIGH' region motif; the sequence is PYANGNIHIGH. Residue Glu562 participates in L-isoleucyl-5'-AMP binding. The 'KMSKS' region signature appears at 603-607; the sequence is KMSKS. Lys606 contacts ATP. Cys903, Cys906, Cys922, and Cys925 together coordinate Zn(2+).

This sequence belongs to the class-I aminoacyl-tRNA synthetase family. IleS type 1 subfamily. In terms of assembly, monomer. Zn(2+) is required as a cofactor.

Its subcellular location is the cytoplasm. It carries out the reaction tRNA(Ile) + L-isoleucine + ATP = L-isoleucyl-tRNA(Ile) + AMP + diphosphate. Its function is as follows. Catalyzes the attachment of isoleucine to tRNA(Ile). As IleRS can inadvertently accommodate and process structurally similar amino acids such as valine, to avoid such errors it has two additional distinct tRNA(Ile)-dependent editing activities. One activity is designated as 'pretransfer' editing and involves the hydrolysis of activated Val-AMP. The other activity is designated 'posttransfer' editing and involves deacylation of mischarged Val-tRNA(Ile). In Buchnera aphidicola subsp. Baizongia pistaciae (strain Bp), this protein is Isoleucine--tRNA ligase.